Here is a 719-residue protein sequence, read N- to C-terminus: Fatty acid oxidation complex subunit alpha (719 aa).

Residues 1–190 (MVYQGNRITV…KLGLVDATVA (190 aa)) are enoyl-CoA hydratase/isomerase. Aspartate 298 contributes to the substrate binding site. Residues 313-719 (HEINEAAVLG…AAGETFYATA (407 aa)) form a 3-hydroxyacyl-CoA dehydrogenase region. NAD(+) is bound by residues methionine 326, aspartate 345, 402 to 404 (VVE), lysine 409, and serine 431. Histidine 452 functions as the For 3-hydroxyacyl-CoA dehydrogenase activity in the catalytic mechanism. Asparagine 455 provides a ligand contact to NAD(+). Asparagine 502 serves as a coordination point for substrate.

It in the N-terminal section; belongs to the enoyl-CoA hydratase/isomerase family. This sequence in the C-terminal section; belongs to the 3-hydroxyacyl-CoA dehydrogenase family. In terms of assembly, heterotetramer of two alpha chains (FadB) and two beta chains (FadA).

The enzyme catalyses a (3S)-3-hydroxyacyl-CoA + NAD(+) = a 3-oxoacyl-CoA + NADH + H(+). It catalyses the reaction a (3S)-3-hydroxyacyl-CoA = a (2E)-enoyl-CoA + H2O. It carries out the reaction a 4-saturated-(3S)-3-hydroxyacyl-CoA = a (3E)-enoyl-CoA + H2O. The catalysed reaction is (3S)-3-hydroxybutanoyl-CoA = (3R)-3-hydroxybutanoyl-CoA. The enzyme catalyses a (3Z)-enoyl-CoA = a 4-saturated (2E)-enoyl-CoA. It catalyses the reaction a (3E)-enoyl-CoA = a 4-saturated (2E)-enoyl-CoA. It participates in lipid metabolism; fatty acid beta-oxidation. Its function is as follows. Involved in the aerobic and anaerobic degradation of long-chain fatty acids via beta-oxidation cycle. Catalyzes the formation of 3-oxoacyl-CoA from enoyl-CoA via L-3-hydroxyacyl-CoA. It can also use D-3-hydroxyacyl-CoA and cis-3-enoyl-CoA as substrate. The chain is Fatty acid oxidation complex subunit alpha from Psychrobacter arcticus (strain DSM 17307 / VKM B-2377 / 273-4).